The primary structure comprises 88 residues: MSSRGSGANAASRQSMTASGGAVKARQLAHLHSQLTQLSHNLATTENLMRMTAVQAEAMRGLGSWHAGLFMAASKVLGEESVQNQQGN.

Over residues 1–15 (MSSRGSGANAASRQS) the composition is skewed to low complexity. The tract at residues 1–24 (MSSRGSGANAASRQSMTASGGAVK) is disordered.

Belongs to the DASH complex HSK3 family. In terms of assembly, component of the DASH complex consisting of ASK1, DAD1, DAD2, DAD3, DAD4, DAM1, DUO1, HSK3, SPC19 and SPC34, with a stoichiometry of one copy of each subunit per complex. Multiple DASH complexes oligomerize to form a ring that encircles spindle microtubules and organizes the rod-like NDC80 complexes of the outer kinetochore. DASH complex oligomerization strengthens microtubule attachments. On cytoplasmic microtubules, DASH complexes appear to form patches instead of rings.

The protein resides in the nucleus. It is found in the cytoplasm. Its subcellular location is the cytoskeleton. The protein localises to the spindle. It localises to the chromosome. The protein resides in the centromere. It is found in the kinetochore. Component of the DASH complex that connects microtubules with kinetochores and couples microtubule depolymerisation to chromosome movement; it is involved in retrieving kinetochores to the spindle poles before their re-orientation on the spindle in early mitosis and allows microtubule depolymerization to pull chromosomes apart and resist detachment during anaphase. Kinetochores, consisting of a centromere-associated inner segment and a microtubule-contacting outer segment, play a crucial role in chromosome segregation by mediating the physical connection between centromeric DNA and microtubules. Kinetochores also serve as an input point for the spindle assembly checkpoint, which delays anaphase until all chromosomes have bioriented on the mitotic spindle. This chain is DASH complex subunit HSK3, found in Chaetomium thermophilum (strain DSM 1495 / CBS 144.50 / IMI 039719) (Thermochaetoides thermophila).